A 913-amino-acid polypeptide reads, in one-letter code: MGSFKSSVFILVLHLLEGALSNSLIHLNNNGYEGIVIAIDPNVPEDETLIQQIKDMVTQASPYLFEATEKRFYFKNVAILVPENWKTKPEYERPKLETYKNADVLVAEPNPPGNDQPYTEQMGKCGEKGERIYFTPDFLAGKRLDEYGPQGRVFVHEWAHLRWGLFNEYNDDQKFYLSNKEIKPVKCSADIAGKNVVNHCQGGSCATKPCRRDRVTGLYAQECEFIPDEQQTEKASIMFSQSIDSVVEFCTEENHNREAPNMQNQRCNLRSTWEVIRDSEDFKKTTPMTAQPPQPTFSLLQIGQRIVCLVLDKSGSMAIGDRLKRLTQAGKLFLLQTVEQGSWVGMVTFDSAAYVQSALRQIKGGTDRDALTKSLPTVASGGTSICSGLRSAFTVIRKKYKTDGSEIVLLTDGEDNTISSCFNEVKQSGAIIHTVALGPSAAAELEELSKMTGGLQTYASDQAQNNGLIDAFGALSSGNGAVSQHSIQLVSRGSTLQNSQWMNGTVIVDSTVGNDTLFLITWTSQPPQILLWDPSGKKQDGFVVDTNTKMAYLQVPGTAKVGTWTYSLQASSQTLTLTVTSRASSATLPPVTVTSKVNKDTGKFPSPVVVYAKIHQGGLPILRATVTALIESVDGKTVTLELLDNGAGADATKDDGIYSRYFTAYNTNGRYSIKVWALGGVNAARQMGISQQNGAMYRAGRMKNGEIIWNPPRPKINIDDLLSKQVPFSRTSSGGSFVASNVPNAPIPDLFPPCQITDLKAKIQGDSLINLTWTAPGDDYDHGRADRYIIRISTNILDLRDKFNDSLQVNTTDLIPKEATSEEVFVFKPENIAFENGTDLFIAIQAVDEVDLESEISNIAQVSLFLPPQTPPETPSPSLPCPDSNITSAIPGIHILKVMWKWLGELQLSVALG.

The first 21 residues, 1–21 (MGSFKSSVFILVLHLLEGALS), serve as a signal peptide directing secretion. The tract at residues 46-199 (DETLIQQIKD…DIAGKNVVNH (154 aa)) is metalloprotease domain. His-156 lines the Zn(2+) pocket. Glu-157 is an active-site residue. His-160 and Asn-167 together coordinate Zn(2+). The region spanning 306 to 475 (IVCLVLDKSG…NGLIDAFGAL (170 aa)) is the VWFA domain. 7 N-linked (GlcNAc...) asparagine glycosylation sites follow: Asn-503, Asn-514, Asn-770, Asn-804, Asn-810, Asn-836, and Asn-885.

It belongs to the CLCR family. Glycosylated. In terms of processing, the translation product is autoproteolytically cleaved by the metalloprotease domain in the endoplasmic reticulum into a N-terminal and a C-terminal products that remain physically associated with each other. The cleavage is necessary for calcium-activated chloride channel (CaCC) activation activity. As to expression, expressed in mucin-producing cells in the respiratory and intestinal tracts, cutaneous sweat glands, and renal mucous glands (at protein level). Strong overexpression in the airways of horses with recurrent airway obstruction (at protein level).

The protein resides in the secreted. It localises to the extracellular space. In terms of biological role, may be involved in mediating calcium-activated chloride conductance. May play critical roles in goblet cell metaplasia, mucus hypersecretion, cystic fibrosis and AHR. May be involved in the regulation of mucus production and/or secretion by goblet cells. Involved in the regulation of tissue inflammation in the innate immune response. May play a role as a tumor suppressor. Induces MUC5AC. The sequence is that of Calcium-activated chloride channel regulator 1 (CLCA1) from Equus caballus (Horse).